The following is a 303-amino-acid chain: L(+)-tartrate dehydratase subunit alpha (303 aa).

C71, C190, and C277 together coordinate iron-sulfur cluster.

It belongs to the class-I fumarase family. Tetramer of two alpha and two beta subunits. Iron-sulfur cluster serves as cofactor.

The catalysed reaction is (2R,3R)-tartrate = oxaloacetate + H2O. The chain is L(+)-tartrate dehydratase subunit alpha (ttdA) from Escherichia coli O6:K15:H31 (strain 536 / UPEC).